The sequence spans 160 residues: Na(+)/H(+) antiporter subunit E1 (160 aa).

The next 4 helical transmembrane spans lie at 1–21, 27–47, 49–69, and 101–121; these read MAIQILVNLILSVFWLFVTGS, FILGYLFALLLVYIMRGVLPG, FYLITVYKIIKLFLVFLIELI, and WQIVLLSNLITLTPGTIVLGI.

The protein belongs to the CPA3 antiporters (TC 2.A.63) subunit E family. In terms of assembly, may form a heterooligomeric complex that consists of seven subunits: mnhA1, mnhB1, mnhC1, mnhD1, mnhE1, mnhF1 and mnhG1.

The protein localises to the cell membrane. Mnh complex is a Na(+)/H(+) antiporter involved in Na(+) excretion. This is Na(+)/H(+) antiporter subunit E1 (mnhE1) from Staphylococcus saprophyticus subsp. saprophyticus (strain ATCC 15305 / DSM 20229 / NCIMB 8711 / NCTC 7292 / S-41).